We begin with the raw amino-acid sequence, 391 residues long: Phosphoprotein (391 aa).

T10 and T16 each carry phosphothreonine. Residues 54–65 are compositionally biased toward polar residues; the sequence is QKNIQHPTASHQ. Disordered regions lie at residues 54–98 and 145–186; these read QKNI…EPLF and TSTP…RSGS. Residue S69 is modified to Phosphoserine. Residues T91, T150, and T165 each carry the phosphothreonine modification. Phosphoserine is present on S188. Residues 218 to 245 are a coiled coil; that stretch reads ANEIMDLLRGMDARLQHLEQKVDKVLAQ. At T250 the chain carries Phosphothreonine. S257 is subject to Phosphoserine. Phosphothreonine is present on residues T258 and T282. A phosphoserine mark is found at S292 and S294. The residue at position 298 (T298) is a Phosphothreonine. Phosphoserine occurs at positions 301 and 374. An interaction with the nucleoprotein region spans residues 343–391; it reads AGRKVMITKMITDCVANPQMKQAFEQRLAKASTEDALNDIKRDIIRNAI. T375 is subject to Phosphothreonine.

Belongs to the rubulavirus/avulavirus P protein family. Homotetramer. Interacts (via multimerization domain) with polymerase L; this interaction forms the polymerase L-P complex. Interacts (via N-terminus) with N0 (via Ncore); this interaction allows P to chaperon N0 to avoid N polymerization before encapsidation. Interacts (via C-terminus) with N-RNA template; this interaction positions the polymerase on the template for both transcription and replication. Interacts with host RPS6KB1 kinase; this interaction may play a role in the viral replication and transcription.

It localises to the virion. In terms of biological role, essential cofactor of the RNA polymerase L that plays a central role in the transcription and replication by forming the polymerase complex with RNA polymerase L and recruiting L to the genomic N-RNA template for RNA synthesis. Also plays a central role in the encapsidation of nascent RNA chains by forming the encapsidation complex with the nucleocapsid protein N (N-P complex). Acts as a chaperone for newly synthesized free N protein, so-called N0, allowing encapsidation of nascent RNA chains during replication. The nucleoprotein protein N prevents excessive phosphorylation of P, which leads to down-regulation of viral transcription/ replication. Participates, together with N, in the formation of viral factories (viroplasms), which are large inclusions in the host cytoplasm where replication takes place. The sequence is that of Phosphoprotein from Mumps virus genotype N (strain L-Zagreb vaccine) (MuV).